Consider the following 878-residue polypeptide: DNA mismatch repair protein MutS (878 aa).

626–633 (GPNMAGKS) contacts ATP.

Belongs to the DNA mismatch repair MutS family.

In terms of biological role, this protein is involved in the repair of mismatches in DNA. It is possible that it carries out the mismatch recognition step. This protein has a weak ATPase activity. The sequence is that of DNA mismatch repair protein MutS from Paracoccus denitrificans (strain Pd 1222).